Here is a 200-residue protein sequence, read N- to C-terminus: Probable GTP-binding protein EngB (200 aa).

Residues 22–194 (TLPEVAFVGR…WKEVLRLTLA (173 aa)) enclose the EngB-type G domain. Residues 30 to 37 (GRSNVGKS), 57 to 61 (GRTQL), 75 to 78 (DLPG), 142 to 145 (TKCD), and 173 to 175 (FSA) each bind GTP. Positions 37 and 59 each coordinate Mg(2+).

Belongs to the TRAFAC class TrmE-Era-EngA-EngB-Septin-like GTPase superfamily. EngB GTPase family. Mg(2+) is required as a cofactor.

In terms of biological role, necessary for normal cell division and for the maintenance of normal septation. The sequence is that of Probable GTP-binding protein EngB from Pelobacter propionicus (strain DSM 2379 / NBRC 103807 / OttBd1).